The chain runs to 341 residues: MTEQQPVAVLGGGSFGTAVANLLAENGVPVRQWMRDPAQAEAMRVNRENPRYLKGIRLHDGVEPVNDLLATLQASELVFVALPSSALRSVLAPHAELLRGKGLVSLTKGIEAQSFKLMSQILEEIAPQARIGVLSGPNLSREIAEHALTATVVASEDEKLCQQVQAVLHGRTFRVYASADRFGVELGGALKNVYAIIAGMAVALGMGENTKSMLITRALAEMTRFAVSQGANPMTFLGLAGVGDLIVTCSSPKSRNYQVGYALGEGHSLEEAVNRLGEVAEGVNTLKVLKAKAQEVQVYMPLVAGLHAILFEGRTLNQVIEHLMRAEPKTDVDFISISGFN.

Serine 14, phenylalanine 15, arginine 35, and lysine 108 together coordinate NADPH. Sn-glycerol 3-phosphate-binding residues include lysine 108 and glycine 136. Serine 140 contributes to the NADPH binding site. Sn-glycerol 3-phosphate-binding residues include lysine 191, aspartate 244, serine 254, arginine 255, and asparagine 256. Lysine 191 (proton acceptor) is an active-site residue. Residue arginine 255 coordinates NADPH. NADPH is bound by residues valine 279 and glutamate 281.

It belongs to the NAD-dependent glycerol-3-phosphate dehydrogenase family.

It is found in the cytoplasm. It catalyses the reaction sn-glycerol 3-phosphate + NAD(+) = dihydroxyacetone phosphate + NADH + H(+). It carries out the reaction sn-glycerol 3-phosphate + NADP(+) = dihydroxyacetone phosphate + NADPH + H(+). The protein operates within membrane lipid metabolism; glycerophospholipid metabolism. Functionally, catalyzes the reduction of the glycolytic intermediate dihydroxyacetone phosphate (DHAP) to sn-glycerol 3-phosphate (G3P), the key precursor for phospholipid synthesis. This Pseudomonas putida (strain GB-1) protein is Glycerol-3-phosphate dehydrogenase [NAD(P)+].